The sequence spans 161 residues: V-type proton ATPase 16 kDa proteolipid subunit c (161 aa).

The Lumenal segment spans residues 1-15; that stretch reads MSYDLATAERAAYAP. Residues 16–36 traverse the membrane as a helical segment; that stretch reads FFGYMGAASAQIFTVLGAAYG. The Cytoplasmic segment spans residues 37 to 58; that stretch reads TAKSAVGISSMGVMRPELIMKS. A helical transmembrane segment spans residues 59–79; the sequence is VIPVIMAGIIGIYGLVVAMVL. Over 80–98 the chain is Lumenal; the sequence is RGKVTSASAGYTLDKGFAH. A helical transmembrane segment spans residues 99 to 119; sequence LAAGLTCGLCGLGAGYAIGIV. Residues 120 to 137 are Cytoplasmic-facing; sequence GDAGVRGTAQQPRLFVGM. The helical transmembrane segment at 138 to 158 threads the bilayer; sequence ILILIFSEVLGLYGMIVALIL. The Lumenal segment spans residues 159-161; the sequence is GTS.

This sequence belongs to the V-ATPase proteolipid subunit family. In terms of assembly, V-ATPase is a heteromultimeric enzyme made up of two complexes: the ATP-hydrolytic V1 complex and the proton translocation V0 complex. The V1 complex consists of three catalytic AB heterodimers that form a heterohexamer, three peripheral stalks each consisting of EG heterodimers, one central rotor including subunits D and F, and the regulatory subunits C and H. The proton translocation complex V0 consists of the proton transport subunit a, a ring of proteolipid subunits c9c'', rotary subunit d, subunits e and f, and the accessory subunits vah-19/Ac45 and vah-20/PRR.

Its subcellular location is the membrane. Proton-conducting pore forming subunit of the V0 complex of vacuolar(H+)-ATPase (V-ATPase), a multisubunit enzyme composed of a peripheral complex (V1) that hydrolyzes ATP and a membrane integral complex (V0) that translocates protons. V-ATPase is responsible for acidifying and maintaining the pH of intracellular compartments and in some cell types, is targeted to the plasma membrane, where it is responsible for acidifying the extracellular environment. The sequence is that of V-type proton ATPase 16 kDa proteolipid subunit c (12) from Ascaris suum (Pig roundworm).